Here is a 258-residue protein sequence, read N- to C-terminus: Thiazole synthase (258 aa).

The active-site Schiff-base intermediate with DXP is Lys-96. 1-deoxy-D-xylulose 5-phosphate is bound by residues Gly-157, 183–184 (AG), and 205–206 (NT).

The protein belongs to the ThiG family. In terms of assembly, homotetramer. Forms heterodimers with either ThiH or ThiS.

It is found in the cytoplasm. The enzyme catalyses [ThiS sulfur-carrier protein]-C-terminal-Gly-aminoethanethioate + 2-iminoacetate + 1-deoxy-D-xylulose 5-phosphate = [ThiS sulfur-carrier protein]-C-terminal Gly-Gly + 2-[(2R,5Z)-2-carboxy-4-methylthiazol-5(2H)-ylidene]ethyl phosphate + 2 H2O + H(+). It functions in the pathway cofactor biosynthesis; thiamine diphosphate biosynthesis. Catalyzes the rearrangement of 1-deoxy-D-xylulose 5-phosphate (DXP) to produce the thiazole phosphate moiety of thiamine. Sulfur is provided by the thiocarboxylate moiety of the carrier protein ThiS. In vitro, sulfur can be provided by H(2)S. This is Thiazole synthase from Alkaliphilus metalliredigens (strain QYMF).